A 602-amino-acid polypeptide reads, in one-letter code: Sensor histidine kinase AtsR (602 aa).

Transmembrane regions (helical) follow at residues Ile-11–Phe-31 and Ala-182–Phe-202. Residues Met-242–Leu-461 form the Histidine kinase domain. His-245 is modified (phosphohistidine; by autocatalysis). Positions His-484–Arg-601 constitute a Response regulatory domain. Asp-533 bears the 4-aspartylphosphate mark.

It is found in the cell inner membrane. It catalyses the reaction ATP + protein L-histidine = ADP + protein N-phospho-L-histidine.. In terms of biological role, member of a two-component regulatory system involved in control of gene expression; inhibits synthesis of (at least) the polyketide antibiotic thailandamide. Its two-component partner may be BTH_I0635. This chain is Sensor histidine kinase AtsR, found in Burkholderia thailandensis (strain ATCC 700388 / DSM 13276 / CCUG 48851 / CIP 106301 / E264).